A 164-amino-acid chain; its full sequence is C-type natriuretic peptide (164 aa).

The signal sequence occupies residues 1 to 23; that stretch reads MVASRLAAGGLLLLALLALALDG. Disordered regions lie at residues 24-93 and 115-134; these read KPAP…AAAA and HPEHHAGGGGGGGGGGGASR. The propeptide occupies 24-142; that stretch reads KPAPPQPLRK…SRRLKGVAKK (119 aa). Residues 58–67 show a composition bias toward gly residues; sequence AGGGGGGGRS. The span at 68-93 shows a compositional bias: low complexity; it reads GSKAANAAPTAPKSKGGAAAAAAAAA. A compositionally biased stretch (gly residues) spans 121–132; that stretch reads GGGGGGGGGGGA. The cysteines at positions 148 and 164 are disulfide-linked.

Belongs to the natriuretic peptide family. As to expression, expressed by the venom gland.

The protein localises to the secreted. Snake venom natriuretic peptide that has a vasorelaxant activity in rat aortic strips and a diuretic potency in anesthetized rats. May act by activating natriuretic receptors (NPR1 and/or NPR2). The chain is C-type natriuretic peptide from Philodryas olfersii (Green snake).